The following is a 446-amino-acid chain: MTNMTQASATEKKGASDLLRFKIFGMPLPLYAFALITLLLSHFYNAIPTDLVGGFALMFVMGAIFGEIGKRLPIFNKYIGGAPVMIFLVAAYFVYAGIFTQKEIDAISNVMDKSNFLNLFIAVLITGAILSVNRKLLLKSLLGYIPTILAGIVGASLFGIVIGLCFGIPVDRIMMLYVLPIMGGGNGAGAVPLSEIYHSVTGRSREEYYSTAIAILTIANIFAIIFAALLDMIGKKYTWLSGEGELVRKASFKTEDDEKAGQITHRETAVGMVLSTTCFLLAYVVAKKILPSIGGVSIHYFAWMVLIVAALNASGLCSPEIKAGAKRLSDFFSKQLLWVLMVGVGVCYTDLQEIIDALTFANVVIAAIIVVGAVVGAAIGGWLIGFYPIESSITAGLCMANRGGSGDLEVLSACNRMNLISYAQISSRLGGGIVLVIASIVFSMMV.

Helical transmembrane passes span 23 to 43 (IFGM…LSHF), 46 to 66 (AIPT…AIFG), 79 to 99 (IGGA…AGIF), 110 to 130 (VMDK…GAIL), and 148 to 168 (ILAG…CFGI). Na(+) contacts are provided by Ile-181 and Gly-183. Asn-186 and Gly-187 together coordinate citrate. 5 helical membrane passes run 213 to 233 (IAIL…LDMI), 267 to 287 (ETAV…VVAK), 289 to 309 (ILPS…LIVA), 335 to 355 (QLLW…QEII), and 364 to 384 (VIAA…GWLI). Na(+) contacts are provided by Met-399 and Asn-401. Arg-402, Gly-404, Ser-405, and Arg-428 together coordinate citrate. The chain crosses the membrane as a helical span at residues 425-445 (ISSRLGGGIVLVIASIVFSMM).

It belongs to the 2-hydroxycarboxylate transporter (2-HCT) (TC 2.A.24) family. As to quaternary structure, homodimer.

It is found in the cell inner membrane. The catalysed reaction is citrate(out) + 2 Na(+)(out) = citrate(in) + 2 Na(+)(in). Secondary active transporter that catalyzes the uptake of citrate across the membrane with the concomitant uptake of sodium. Is specific for citrate. The polypeptide is Citrate/sodium symporter (Salmonella pullorum).